The following is an 85-amino-acid chain: UPF0386 protein TM1040_0419 (85 aa).

Residues 62–85 (SKSSRPYQISEKGRRSVRAQLDNR) are disordered.

This sequence belongs to the UPF0386 family.

This Ruegeria sp. (strain TM1040) (Silicibacter sp.) protein is UPF0386 protein TM1040_0419.